The chain runs to 160 residues: S-ribosylhomocysteine lyase (160 aa).

Fe cation-binding residues include histidine 57, histidine 61, and cysteine 127.

This sequence belongs to the LuxS family. In terms of assembly, homodimer. Fe cation is required as a cofactor.

It catalyses the reaction S-(5-deoxy-D-ribos-5-yl)-L-homocysteine = (S)-4,5-dihydroxypentane-2,3-dione + L-homocysteine. Involved in the synthesis of autoinducer 2 (AI-2) which is secreted by bacteria and is used to communicate both the cell density and the metabolic potential of the environment. The regulation of gene expression in response to changes in cell density is called quorum sensing. Catalyzes the transformation of S-ribosylhomocysteine (RHC) to homocysteine (HC) and 4,5-dihydroxy-2,3-pentadione (DPD). The polypeptide is S-ribosylhomocysteine lyase (Streptococcus sanguinis (strain SK36)).